The sequence spans 300 residues: Glucose and ribitol dehydrogenase homolog (300 aa).

The span at 1-14 (MASQQFPPQNQETQ) shows a compositional bias: polar residues. The tract at residues 1–23 (MASQQFPPQNQETQPGKEHAMDP) is disordered. 44 to 68 (IVTGGDSGIGRAVCLCFALEGATVA) is an NAD(+) binding site. S192 serves as a coordination point for substrate. Residue Y205 is the Proton acceptor of the active site.

Belongs to the short-chain dehydrogenases/reductases (SDR) family.

Functionally, may act as a short alcohol-polyol-sugar dehydrogenase possibly related to carbohydrate metabolism and the acquisition of desiccation tolerance. May also be involved in signal transduction. The sequence is that of Glucose and ribitol dehydrogenase homolog from Oryza sativa subsp. japonica (Rice).